The following is a 39-amino-acid chain: Cytochrome b559 subunit beta (39 aa).

The chain crosses the membrane as a helical span at residues 14-30 (WLAVHGLAVPTVFFLGS). H18 lines the heme pocket.

It belongs to the PsbE/PsbF family. In terms of assembly, heterodimer of an alpha subunit and a beta subunit. PSII is composed of 1 copy each of membrane proteins PsbA, PsbB, PsbC, PsbD, PsbE, PsbF, PsbH, PsbI, PsbJ, PsbK, PsbL, PsbM, PsbT, PsbX, PsbY, PsbZ, Psb30/Ycf12, at least 3 peripheral proteins of the oxygen-evolving complex and a large number of cofactors. It forms dimeric complexes. The cofactor is heme b.

The protein localises to the plastid membrane. This b-type cytochrome is tightly associated with the reaction center of photosystem II (PSII). PSII is a light-driven water:plastoquinone oxidoreductase that uses light energy to abstract electrons from H(2)O, generating O(2) and a proton gradient subsequently used for ATP formation. It consists of a core antenna complex that captures photons, and an electron transfer chain that converts photonic excitation into a charge separation. This is Cytochrome b559 subunit beta from Cuscuta europaea (European dodder).